We begin with the raw amino-acid sequence, 191 residues long: Cell division protein SepF (191 aa).

Low complexity predominate over residues 150 to 164 (TSSSPEEASPSSVST). The segment at 150–191 (TSSSPEEASPSSVSTENTPQYSLGKNTTPEPAWGNSKLSAYS) is disordered. The span at 165–178 (ENTPQYSLGKNTTP) shows a compositional bias: polar residues.

Belongs to the SepF family. Homodimer. Interacts with FtsZ.

Its subcellular location is the cytoplasm. In terms of biological role, cell division protein that is part of the divisome complex and is recruited early to the Z-ring. Probably stimulates Z-ring formation, perhaps through the cross-linking of FtsZ protofilaments. Its function overlaps with FtsA. This is Cell division protein SepF from Prochlorococcus marinus (strain AS9601).